The chain runs to 785 residues: MSTTGHRAGVFKKPSKPHKSWKGKRTKGEITSENRGREGVKQLTRSAHSTHRTISKDARRNQLKMARDQKMADAMERRRTSNAPCLVTVVSLGVGARPTEFIKKLATCDETIIQTTSPSTIDFAIPRFKSRVSFLTPDKDNVDGVLDAIRASDVLCFLWPMSAELSEWDEQLLTIIKANGLPTIVSVVPGLGSIANHKKKEDVRKGIEFIISKWSMSNAGVMPADSVTDNLQLLRILNETKKKPLTLQARHSYMLVENLECSDKTGETCTLVAQGYLRGPEWNANNLVHLPGFGDFQISKIESTVDPHPLKAHNKTPEAQIIAKSDDKRQNTETEITPDSMDGEQTWPTREELEEADKELRRVPKGTSSYQAAWILDDEDDEDEEDSDEDMDDSDNEEVEDDSEEEEPMDDLKSEAGETTASEMMFDDGIDEDINMAEVEKYRKERENAQWPDEVDTPMDMPARIAFQKYRGLKSFRTSTWDPKENLPLDYARIFQFANYRNTKKNVMSKIGGNDVDADSVADKKFNGAFASVFIENVPVAVLEAYKDAKNLVLFQLLPHEHKMSVLNMVLKKHPSCTIPITSDQNQKFIFYVGFRQFEANAVFSSNTPGDKFKLERFMPTEKTFVATVYAPITFNPATVLCFRQDDKGRQELVATGSILDSNPDRIVLKRTVLAGHPYKINRRAVVVRYMFFNREDIEWFKPVELYTPSGRRGHIKEAVGTHGNMKCRFDQQLNAQDSVMLNLYKRVFPVWNYSIFNRSLNPSRFVERSRVESISLVNEDAMEE.

Residues 1–59 (MSTTGHRAGVFKKPSKPHKSWKGKRTKGEITSENRGREGVKQLTRSAHSTHRTISKDAR) form a disordered region. The segment covering 9 to 25 (GVFKKPSKPHKSWKGKR) has biased composition (basic residues). Basic and acidic residues predominate over residues 26–40 (TKGEITSENRGREGV). The Bms1-type G domain occupies 83–243 (APCLVTVVSL…LRILNETKKK (161 aa)). The segment at 307 to 426 (PHPLKAHNKT…GETTASEMMF (120 aa)) is disordered. The segment covering 376–409 (LDDEDDEDEEDSDEDMDDSDNEEVEDDSEEEEPM) has biased composition (acidic residues).

Belongs to the TRAFAC class translation factor GTPase superfamily. Bms1-like GTPase family. TSR1 subfamily.

The protein resides in the nucleus. It is found in the nucleolus. Required during maturation of the 40S ribosomal subunit in the nucleolus. The polypeptide is Pre-rRNA-processing protein TSR1 homolog (tag-151) (Caenorhabditis elegans).